The following is a 184-amino-acid chain: Endoribonuclease YbeY (184 aa).

Zn(2+) contacts are provided by H118, H122, and H128. A disordered region spans residues 156-184 (YHQDRQSQKDQRLLDKSRYFDELNHGDTP). A compositionally biased stretch (basic and acidic residues) spans 157-184 (HQDRQSQKDQRLLDKSRYFDELNHGDTP).

The protein belongs to the endoribonuclease YbeY family. Zn(2+) is required as a cofactor.

The protein localises to the cytoplasm. Single strand-specific metallo-endoribonuclease involved in late-stage 70S ribosome quality control and in maturation of the 3' terminus of the 16S rRNA. The sequence is that of Endoribonuclease YbeY from Mycolicibacterium vanbaalenii (strain DSM 7251 / JCM 13017 / BCRC 16820 / KCTC 9966 / NRRL B-24157 / PYR-1) (Mycobacterium vanbaalenii).